The primary structure comprises 341 residues: Two-component response regulator ORR30 (341 aa).

Residues 12–127 form the Response regulatory domain; it reads RVLVIDDDCS…ELSNIWQHIF (116 aa). At Asp-63 the chain carries 4-aspartylphosphate. The HTH myb-type domain maps to 195–254; that stretch reads DLGKSRLTWTTQLHRQFIAAVNHLGEDKAVPKKILGIMKVKHLTREQVASHLQKYRMQLK. Residues 225–250 constitute a DNA-binding region (H-T-H motif); that stretch reads PKKILGIMKVKHLTREQVASHLQKYR.

Belongs to the ARR family. Type-B subfamily. Two-component system major event consists of a His-to-Asp phosphorelay between a sensor histidine kinase (HK) and a response regulator (RR). In plants, the His-to-Asp phosphorelay involves an additional intermediate named Histidine-containing phosphotransfer protein (HPt). This multistep phosphorelay consists of a His-Asp-His-Asp sequential transfer of a phosphate group between first a His and an Asp of the HK protein, followed by the transfer to a conserved His of the HPt protein and finally the transfer to an Asp in the receiver domain of the RR protein.

The protein resides in the nucleus. In terms of biological role, transcriptional activator that acts as a floral inducer to promote short-day (SD) flowering pathway. Activates HD3A and other FT-like genes independently from HD1. May also activate MADS-box transcription factors involved in flowering regulation. Functions as a response regulator involved in His-to-Asp phosphorelay signal transduction system. Phosphorylation of the Asp residue in the receiver domain activates the ability of the protein to promote the transcription of target genes. May directly activate some type-A response regulators in response to cytokinins. This is Two-component response regulator ORR30 from Oryza sativa subsp. japonica (Rice).